The chain runs to 64 residues: Conotoxin reg3.16 (64 aa).

The N-terminal stretch at 1 to 19 (MSKLGVFLTICLLLFPLTA) is a signal peptide. A propeptide spanning residues 20-49 (LQLDGDQPADKPAQRKLKILPKRKHWTRFT) is cleaved from the precursor. 3 disulfides stabilise this stretch: Cys-50–Cys-64, Cys-51–Cys-60, and Cys-56–Cys-63.

The protein belongs to the conotoxin M superfamily. Expressed by the venom duct.

The protein resides in the secreted. This chain is Conotoxin reg3.16, found in Conus regius (Crown cone).